The chain runs to 199 residues: DNA dC-&gt;dU-editing enzyme APOBEC-3A (199 aa).

Positions 27–143 (GRHKTYLCYE…PLYKEALQML (117 aa)) constitute a CMP/dCMP-type deaminase domain. H70 lines the Zn(2+) pocket. The active-site Proton donor is E72. Positions 101 and 106 each coordinate Zn(2+).

Belongs to the cytidine and deoxycytidylate deaminase family. In terms of assembly, interacts with AGO2. Interacts with TRIB3 (via N-terminus). The cofactor is Zn(2+). In terms of tissue distribution, expressed in peripheral leukocytes with higher expression in CD14-positive phagocytic cells. Highly expressed in keratinocytes and in periphery blood monocytes. Also detected in non-lymphoid tissues including lung and adipose tissues. Found at high levels in colorectal adenocarcinoma, Burkitt's lymphoma and chronic myelogenous leukemia.

The protein localises to the nucleus. It is found in the cytoplasm. The catalysed reaction is a 2'-deoxycytidine in single-stranded DNA + H2O + H(+) = a 2'-deoxyuridine in single-stranded DNA + NH4(+). Its function is as follows. DNA deaminase (cytidine deaminase) with restriction activity against viruses, foreign DNA and mobility of retrotransposons. Exhibits antiviral activity against adeno-associated virus (AAV) and human T-cell leukemia virus type 1 (HTLV-1) and may inhibit the mobility of LTR and non-LTR retrotransposons. Selectively targets single-stranded DNA and can deaminate both methylcytosine and cytosine in foreign DNA. Can induce somatic hypermutation in the nuclear and mitochondrial DNA. May also play a role in the epigenetic regulation of gene expression through the process of active DNA demethylation. The protein is DNA dC-&gt;dU-editing enzyme APOBEC-3A (APOBEC3A) of Homo sapiens (Human).